A 977-amino-acid polypeptide reads, in one-letter code: Aspartate, glycine, lysine and serine-rich protein (977 aa).

The tract at residues 23–116 (GVLPDVDSGF…PITNLGSSTS (94 aa)) is disordered. Over residues 37-50 (EETKSEPKQPDTKP) the composition is skewed to basic and acidic residues. Residues 51–63 (EQPSVSKPDSSVN) show a composition bias toward polar residues. N-linked (GlcNAc...) asparagine glycosylation occurs at Asn136. Disordered regions lie at residues 246-767 (AGGG…TSRG) and 780-922 (GGGK…GSGL). Residues 251-278 (YYSDSSDSSDSDSSGSDSSESGSSESGS) are compositionally biased toward low complexity. Polar residues predominate over residues 309 to 325 (NGSPDNGTPGSGSSRYT). The span at 410–427 (LEDELLGSDSSDEDDIDD) shows a compositional bias: acidic residues. Residues 428-443 (GLGGLGLGAGPGGPGG) show a composition bias toward gly residues. Composition is skewed to basic residues over residues 447–457 (TPKHKPRTDKK) and 465–540 (KRKP…VQRK). Basic and acidic residues predominate over residues 541 to 557 (QPREYKQESPEVEREHS). Low complexity predominate over residues 572 to 583 (KILITSLTSSRG). Residues 591–643 (DGSGSGNGGGDDGNGGGAGNGGGAGNGGGAGNGGGAGNGGGNGGGGNGGGGND) show a composition bias toward gly residues. Over residues 660–675 (EHRNRCEDDDDYREKC) the composition is skewed to basic and acidic residues. The span at 700–724 (SGSSSSSSATESESSSTSTTPSTSS) shows a compositional bias: low complexity. 3 stretches are compositionally biased toward polar residues: residues 730–744 (ILST…TRSG), 758–767 (SRPSVATSRG), and 785–801 (STGT…TSSA). Composition is skewed to low complexity over residues 803–814 (GLDLSGLLGQLG), 822–857 (GPKP…GLLG), and 870–907 (KKPT…KLSP).

As to expression, component of the acid-insoluble and acid-soluble organic matrix of calcified layers of the shell (at protein level).

It is found in the secreted. The polypeptide is Aspartate, glycine, lysine and serine-rich protein (Lottia gigantea (Giant owl limpet)).